Consider the following 449-residue polypeptide: Tubulin beta-4 chain (449 aa).

The short motif at 1 to 4 (MREI) is the MREI motif element. Gln-11, Glu-69, Ser-138, Gly-142, Thr-143, Gly-144, Asn-204, and Asn-226 together coordinate GTP. Glu-69 provides a ligand contact to Mg(2+). The tract at residues 421–449 (EYQQYQDATAEEEGEMYEDDEEESEQGAK) is disordered. A compositionally biased stretch (acidic residues) spans 429-449 (TAEEEGEMYEDDEEESEQGAK). Position 438 is a 5-glutamyl polyglutamate (Glu-438). Ser-444 carries the post-translational modification Phosphoserine.

The protein belongs to the tubulin family. Dimer of alpha and beta chains. A typical microtubule is a hollow water-filled tube with an outer diameter of 25 nm and an inner diameter of 15 nM. Alpha-beta heterodimers associate head-to-tail to form protofilaments running lengthwise along the microtubule wall with the beta-tubulin subunit facing the microtubule plus end conferring a structural polarity. Microtubules usually have 13 protofilaments but different protofilament numbers can be found in some organisms and specialized cells. The cofactor is Mg(2+). Post-translationally, some glutamate residues at the C-terminus are polyglycylated, resulting in polyglycine chains on the gamma-carboxyl group. Glycylation is mainly limited to tubulin incorporated into axonemes (cilia and flagella) whereas glutamylation is prevalent in neuronal cells, centrioles, axonemes, and the mitotic spindle. Both modifications can coexist on the same protein on adjacent residues, and lowering polyglycylation levels increases polyglutamylation, and reciprocally. The precise function of polyglycylation is still unclear. Some glutamate residues at the C-terminus are polyglutamylated, resulting in polyglutamate chains on the gamma-carboxyl group. Polyglutamylation plays a key role in microtubule severing by spastin (SPAST). SPAST preferentially recognizes and acts on microtubules decorated with short polyglutamate tails: severing activity by SPAST increases as the number of glutamates per tubulin rises from one to eight, but decreases beyond this glutamylation threshold. As to expression, neuron specific.

It is found in the cytoplasm. The protein resides in the cytoskeleton. Its function is as follows. Tubulin is the major constituent of microtubules, a cylinder consisting of laterally associated linear protofilaments composed of alpha- and beta-tubulin heterodimers. Microtubules grow by the addition of GTP-tubulin dimers to the microtubule end, where a stabilizing cap forms. Below the cap, tubulin dimers are in GDP-bound state, owing to GTPase activity of alpha-tubulin. The chain is Tubulin beta-4 chain from Gallus gallus (Chicken).